The primary structure comprises 2863 residues: Lipopolysaccharide-responsive and beige-like anchor protein (2863 aa).

3 disordered regions span residues 1 to 35 (MASEDNRVPSPPPTGDDGGGGGREETPTEGGALSL), 969 to 1005 (VGSQQPDTKDSPVCPHFTTNGNENSSIEKTSSLESAS), and 1018 to 1039 (EMKAEQENQELPDEGTLEETLT). At alanine 2 the chain carries N-acetylalanine. Residues serine 10, serine 979, and serine 1003 each carry the phosphoserine modification. Residues 985 to 1005 (FTTNGNENSSIEKTSSLESAS) show a composition bias toward polar residues. Residues 1006 to 1053 (NIELQTTNTSYEEMKAEQENQELPDEGTLEETLTNETRNADDLEVSSD) adopt a coiled-coil conformation. Residues 1024–1034 (ENQELPDEGTL) are compositionally biased toward acidic residues. Serine 1100, serine 1135, and serine 1139 each carry phosphoserine. A compositionally biased stretch (basic and acidic residues) spans 1161 to 1176 (PVTEKQTDTETQDSKD). Residues 1161–1193 (PVTEKQTDTETQDSKDSGIQTMTASGSSAMSPE) form a disordered region. Residues 1177-1193 (SGIQTMTASGSSAMSPE) show a composition bias toward polar residues. A phosphoserine mark is found at serine 1233, serine 1247, and serine 1261. A WD 1 repeat occupies 1301-1343 (STVFRIPEFNWSQMHQRLLTDLLFSIETDIQMWRSHSTKTVMD). Residues serine 1488 and serine 1498 each carry the phosphoserine modification. A helical membrane pass occupies residues 1531-1548 (FLALAVVYFISVLMVSKY). Over residues 1586-1599 (LTTASVEESESTSS) the composition is skewed to low complexity. Disordered stretches follow at residues 1586–1668 (LTTA…KATP) and 1759–1789 (QASDMGGESPGSRSSNAKLPSVPTVDSVSQD). Phosphoserine is present on serine 1605. Positions 1650-1664 (KSPETKNDRGNDLDT) are enriched in basic and acidic residues. A phosphoserine mark is found at serine 1767, serine 1770, and serine 2064. Residues 1769 to 1789 (GSRSSNAKLPSVPTVDSVSQD) show a composition bias toward polar residues. Positions 2073 to 2181 (NLAGPVSLST…TVKKVVNYLP (109 aa)) constitute a BEACH-type PH domain. Residues 2200-2489 (ASPRQLFKAS…QLLIEPHPPR (290 aa)) enclose the BEACH domain. Serine 2496 carries the post-translational modification Phosphoserine. 5 WD repeats span residues 2591–2633 (DQSI…LIQV), 2636–2679 (GHWD…SGIG), 2695–2735 (GHDY…RTLE), 2777–2816 (ETDDNIRAIQLSRDGQYLLTGGDRGVVVVRQVSDLKQLFA), and 2819–2858 (GCDAGIRAMALSYDQRCIISGMASGSIVLFYNDFNRWHHE).

In terms of assembly, interacts with TOM1 and TOLLIP. In terms of tissue distribution, ubiquitous.

The protein resides in the cell membrane. It is found in the endoplasmic reticulum membrane. Its subcellular location is the golgi apparatus. The protein localises to the trans-Golgi network membrane. It localises to the lysosome membrane. Involved in coupling signal transduction and vesicle trafficking to enable polarized secretion and/or membrane deposition of immune effector molecules. Involved in phagophore growth during mitophagy by regulating ATG9A trafficking to mitochondria. This is Lipopolysaccharide-responsive and beige-like anchor protein from Homo sapiens (Human).